A 293-amino-acid chain; its full sequence is UPF0282 protein MK0213 (293 aa).

Belongs to the UPF0282 family.

This Methanopyrus kandleri (strain AV19 / DSM 6324 / JCM 9639 / NBRC 100938) protein is UPF0282 protein MK0213.